The chain runs to 374 residues: Carbamoyl phosphate synthase small chain (374 aa).

The segment at M1–P186 is CPSase. S47, G237, and G239 together coordinate L-glutamine. Residues K189–S374 form the Glutamine amidotransferase type-1 domain. The active-site Nucleophile is the C265. L-glutamine contacts are provided by L266, Q269, N307, G309, and F310. Active-site residues include H349 and E351.

Belongs to the CarA family. Composed of two chains; the small (or glutamine) chain promotes the hydrolysis of glutamine to ammonia, which is used by the large (or ammonia) chain to synthesize carbamoyl phosphate. Tetramer of heterodimers (alpha,beta)4.

It catalyses the reaction hydrogencarbonate + L-glutamine + 2 ATP + H2O = carbamoyl phosphate + L-glutamate + 2 ADP + phosphate + 2 H(+). It carries out the reaction L-glutamine + H2O = L-glutamate + NH4(+). Its pathway is amino-acid biosynthesis; L-arginine biosynthesis; carbamoyl phosphate from bicarbonate: step 1/1. It functions in the pathway pyrimidine metabolism; UMP biosynthesis via de novo pathway; (S)-dihydroorotate from bicarbonate: step 1/3. Small subunit of the glutamine-dependent carbamoyl phosphate synthetase (CPSase). CPSase catalyzes the formation of carbamoyl phosphate from the ammonia moiety of glutamine, carbonate, and phosphate donated by ATP, constituting the first step of 2 biosynthetic pathways, one leading to arginine and/or urea and the other to pyrimidine nucleotides. The small subunit (glutamine amidotransferase) binds and cleaves glutamine to supply the large subunit with the substrate ammonia. This is Carbamoyl phosphate synthase small chain from Xylella fastidiosa (strain Temecula1 / ATCC 700964).